A 447-amino-acid chain; its full sequence is MTRLFGTDGVRGLANKKLTPILALRLGQAAAEVLTSDRESYERRPLAIIGRDPRVSGEMLDAAIASGLASRGVDVVRVGVLPTPAIAFLTDDFGADLGVMISASHNPMPDNGIKFFSAGGKKLPDEVEDRIQAAMDNLTEDGPTATKIGRIISEAPDGRERYLKHLAEVVTTDLSGIKVVVDTANGAASKVAPQAYEAAGAEVVAIHNKPNAFNINEDCGSTHIEKTQEAVVEHGADLGLAHDGDADRCLAVDAEGNVVDGDQIMAILAVGMKEENDLRFNTLVATVMSNLGLKLAMQEQGIDIKETAVGDRYVLEELNRGDFSLGGEQSGHVVLPDDCTTGDGTLTGLSIMARMAKSGKSLKELASVMTVLPQVLINVPVSDKAVILNAPEVKEAIAAAEAELGETGRVLLRPSGTEELFRVMVEAAEKEQARKVAGKLAAVVAAV.

S104 functions as the Phosphoserine intermediate in the catalytic mechanism. 4 residues coordinate Mg(2+): S104, D243, D245, and D247. The residue at position 104 (S104) is a Phosphoserine.

This sequence belongs to the phosphohexose mutase family. Mg(2+) serves as cofactor. Activated by phosphorylation.

It carries out the reaction alpha-D-glucosamine 1-phosphate = D-glucosamine 6-phosphate. Its function is as follows. Catalyzes the conversion of glucosamine-6-phosphate to glucosamine-1-phosphate. This chain is Phosphoglucosamine mutase, found in Corynebacterium aurimucosum (strain ATCC 700975 / DSM 44827 / CIP 107346 / CN-1) (Corynebacterium nigricans).